The following is a 485-amino-acid chain: Shutoff alkaline exonuclease (485 aa).

This sequence belongs to the herpesviridae alkaline nuclease family. Forms a complex with the DNA polymerase, the DNA polymerase processivity factor, and the major DNA binding protein.

The protein localises to the host nucleus. Its subcellular location is the host cytoplasm. In terms of biological role, plays a role in processing non linear or branched viral DNA intermediates in order to promote the production of mature packaged unit-length linear progeny viral DNA molecules. Exhibits endonuclease and exonuclease activities and accepts both double-stranded and single-stranded DNA as substrate. Exonuclease digestion of DNA is in the 5'-&gt; 3' direction and the products are 5'-monophosphate nucleosides. Additionally, forms a recombinase with the major DNA-binding protein, which displays strand exchange activity. Also acts as a cytoplasmic RNA endonuclease that induces degradation of the majority of the cellular messenger RNAs during early lytic infection. The resulting inhibition of cellular protein synthesis serves to ensure maximal viral gene expression and evasion from host immune response. Internally cleaves host mRNAs which are then degraded by the cellular exonuclease XRN1. Bypasses therefore the regulatory steps of deadenylation and decapping normally required for XRN1 activation. The protein is Shutoff alkaline exonuclease (37) of Alcelaphine herpesvirus 1 (strain C500) (AlHV-1).